The sequence spans 1544 residues: Rho guanine nucleotide exchange factor 12 (1544 aa).

The segment at 1–62 (MSGTQSTITD…KTKSSSEESR (62 aa)) is disordered. Serine 2 bears the N-acetylserine mark. A compositionally biased stretch (basic and acidic residues) spans 28-45 (SPTDKKQKVERIASHDFD). Serine 41 bears the Phosphoserine mark. One can recognise a PDZ domain in the interval 72–151 (CVIIQKDDNG…LTVQGRPPGS (80 aa)). Residues 194 to 262 (MGEENNVVHN…LSKATGSAQD (69 aa)) adopt a coiled-coil conformation. The segment at 247-346 (PQLQEQLSKA…SLVGSPSTRI (100 aa)) is disordered. Composition is skewed to polar residues over residues 249-260 (LQEQLSKATGSA) and 293-309 (DCSS…NADS). Serine 309 carries the post-translational modification Phosphoserine. Residues 313–329 (GPKERIYLEENPEKSET) are compositionally biased toward basic and acidic residues. Positions 330–344 (IQDTDTQSLVGSPST) are enriched in polar residues. Serine 341 carries the phosphoserine modification. The RGSL domain maps to 367–558 (GQCSCFQSIE…LMYMKHLGVK (192 aa)). The interval 570–706 (GRIGFLPKIK…GDTLDGTPRT (137 aa)) is disordered. The span at 582–592 (MKKDKEGEEKG) shows a compositional bias: basic and acidic residues. Residues 631–640 (STPSSVSPEP) are compositionally biased toward polar residues. Serine 637 bears the Phosphoserine mark. The segment covering 663–676 (ANSMSSVASGASFS) has biased composition (low complexity). Phosphothreonine is present on threonine 736. Positions 787–977 (KRQEVINELF…RQILNYVNQA (191 aa)) constitute a DH domain. Positions 1019–1132 (KMIHEGPLVW…WQDLICRMAA (114 aa)) constitute a PH domain. Over residues 1138–1149 (STKPIPLPQSTP) the composition is skewed to polar residues. Residues 1138–1179 (STKPIPLPQSTPGEGDNDEEDPSKLKEEQHGISVTGLQSPDR) form a disordered region. A phosphoserine mark is found at serine 1288, serine 1327, serine 1377, serine 1457, and serine 1541.

In terms of assembly, interacts with GNA12 and GNA13, probably through the RGS-like domain. Interacts with RHOA, PLXNB1 and PLXNB2. Interacts through its PDZ domain with IGF1R beta subunit. Interacts with GCSAM. Found in a complex with ARHGEF11 and ARHGEF12; binding to ARHGEF11 and ARHGEF12 enhances CDC42 GEF activity of PLEKHG4B, and PLEKHG4B, in turn, inhibits ARHGEF11- and ARHGEF12-mediated RHOA activation. Ubiquitously expressed. Isoform 2 is found in jejunum and testis.

The protein localises to the cytoplasm. Its subcellular location is the membrane. Its function is as follows. May play a role in the regulation of RhoA GTPase by guanine nucleotide-binding alpha-12 (GNA12) and alpha-13 (GNA13). Acts as guanine nucleotide exchange factor (GEF) for RhoA GTPase and may act as GTPase-activating protein (GAP) for GNA12 and GNA13. The chain is Rho guanine nucleotide exchange factor 12 (ARHGEF12) from Homo sapiens (Human).